The following is an 86-amino-acid chain: Large ribosomal subunit protein uL23 (86 aa).

The protein belongs to the universal ribosomal protein uL23 family. As to quaternary structure, part of the 50S ribosomal subunit. Contacts protein L29.

Functionally, binds to 23S rRNA. One of the proteins that surrounds the polypeptide exit tunnel on the outside of the ribosome. This is Large ribosomal subunit protein uL23 from Methanococcus maripaludis (strain DSM 14266 / JCM 13030 / NBRC 101832 / S2 / LL).